A 220-amino-acid chain; its full sequence is PKHD-type hydroxylase sync_1544 (220 aa).

The Fe2OG dioxygenase domain occupies 79-173 (KLHRFLISKT…RTVCVGWIES (95 aa)). Residues histidine 97, aspartate 99, and histidine 154 each coordinate Fe cation. Position 164 (arginine 164) interacts with 2-oxoglutarate.

The cofactor is Fe(2+). It depends on L-ascorbate as a cofactor.

The polypeptide is PKHD-type hydroxylase sync_1544 (Synechococcus sp. (strain CC9311)).